Here is a 599-residue protein sequence, read N- to C-terminus: Elongation factor 4 (599 aa).

One can recognise a tr-type G domain in the interval 2–184 (KNIRNFSIIA…RLVRDIPPPE (183 aa)). Residues 14–19 (DHGKST) and 131–134 (NKID) each bind GTP.

It belongs to the TRAFAC class translation factor GTPase superfamily. Classic translation factor GTPase family. LepA subfamily.

Its subcellular location is the cell inner membrane. It carries out the reaction GTP + H2O = GDP + phosphate + H(+). Its function is as follows. Required for accurate and efficient protein synthesis under certain stress conditions. May act as a fidelity factor of the translation reaction, by catalyzing a one-codon backward translocation of tRNAs on improperly translocated ribosomes. Back-translocation proceeds from a post-translocation (POST) complex to a pre-translocation (PRE) complex, thus giving elongation factor G a second chance to translocate the tRNAs correctly. Binds to ribosomes in a GTP-dependent manner. This Cronobacter sakazakii (strain ATCC BAA-894) (Enterobacter sakazakii) protein is Elongation factor 4.